A 1012-amino-acid polypeptide reads, in one-letter code: Vacuolar membrane protease (1012 aa).

At 1–60 (MRRSTDPRNLLVRRGPLLVDGESAISELDPGFFPTGDAPKMSSTTRRRFNLIAFTPGPVT) the chain is on the cytoplasmic side. A helical membrane pass occupies residues 61–81 (VISSLVYLALLIPLLLVHTIV). Residues 82-432 (PSAPKSNPKG…SFAVFRLHTL (351 aa)) are Vacuolar-facing. An N-linked (GlcNAc...) asparagine glycan is attached at asparagine 159. 2 residues coordinate Zn(2+): histidine 215 and aspartate 227. The active-site Proton acceptor is glutamate 261. 3 residues coordinate Zn(2+): glutamate 262, glutamate 287, and histidine 360. The chain crosses the membrane as a helical span at residues 433-453 (FAISVTLLVVCPIVLFVIGII). Residues 454–487 (LSKMDKMYLFSIHETIPETKEKVSVRGLRGLFRY) lie on the Cytoplasmic side of the membrane. The chain crosses the membrane as a helical span at residues 488–508 (PIILVVSSGILIGLSYLLAKV). The Vacuolar segment spans residues 509–518 (NPFIVHSSSY). A helical membrane pass occupies residues 519-539 (AVWSMMLSSWIFMTWFLSCIA). Over 540-550 (DFFRPSALHRA) the chain is Cytoplasmic. A helical transmembrane segment spans residues 551 to 571 (YTFTWQLLVMWVLLVISTVYV). Topologically, residues 572-575 (NQHD) are vacuolar. A helical transmembrane segment spans residues 576–596 (IAAGYFIVFYFAGTFLATLIS). Residues 597-710 (YLELFALPNK…WSASLPTWTW (114 aa)) are Cytoplasmic-facing. Over residues 614–629 (SQYPSRLGSNRSSRIL) the composition is skewed to polar residues. The segment at 614–660 (SQYPSRLGSNRSSRILSPSADELPTGGDNNGEIYDGEEEPTESSSLL) is disordered. Residues 711 to 731 (VLQFLFVGPVVIMFIGQLGLF) form a helical membrane-spanning segment. Over 732–743 (LTSAMNQVGADG) the chain is Vacuolar. The chain crosses the membrane as a helical span at residues 744–764 (VGLLVVYIAIAVFSVLLLIPL). Topologically, residues 765–777 (SPFIHRFTYHVPT) are cytoplasmic. Residues 778 to 798 (FLLLVFIATLIYNLAAFPFSA) form a helical membrane-spanning segment. Residues 799–1012 (ENRLKIFFVQ…DGLVEVSRGF (214 aa)) lie on the Vacuolar side of the membrane. Residues asparagine 842 and asparagine 878 are each glycosylated (N-linked (GlcNAc...) asparagine).

It belongs to the peptidase M28 family. Requires Zn(2+) as cofactor.

The protein resides in the vacuole membrane. Its function is as follows. May be involved in vacuolar sorting and osmoregulation. In Coccidioides posadasii (strain RMSCC 757 / Silveira) (Valley fever fungus), this protein is Vacuolar membrane protease.